A 240-amino-acid polypeptide reads, in one-letter code: Membrane-spanning 4-domains subfamily A member 7 (240 aa).

At 1–47 the chain is on the cytoplasmic side; that stretch reads MLLQSQTMGVSHSFTPKGITIPQREKPGHMYQNEDYLQNGLPTETTV. A helical membrane pass occupies residues 48–68; the sequence is LGTVQILCCLLISSLGAILVF. At 69 to 83 the chain is on the extracellular side; that stretch reads APYPSHFNPAISTTL. Residues 84–104 form a helical membrane-spanning segment; that stretch reads MSGYPFLGALCFGITGSLSII. Topologically, residues 105–121 are cytoplasmic; the sequence is SGKQSTKPFDLSSLTSN. The chain crosses the membrane as a helical span at residues 122–142; that stretch reads AVSSVTAGAGLFLLADSMVAL. Over 143–178 the chain is Extracellular; sequence RTASQHCGSEMDYLSSLPYSEYYYPIYEIKDCLLTS. Residues 179 to 199 form a helical membrane-spanning segment; it reads VSLTGVLVVMLIFTVLELLLA. Residues 200–240 are Cytoplasmic-facing; sequence AYSSVFWWKQLYSNNPGSSFSSTQSQDHIQQVKKSSSRSWI. Residues 218–240 are disordered; it reads SFSSTQSQDHIQQVKKSSSRSWI.

The protein belongs to the MS4A family. Ubiquitous expression in normal tissues. Expression is more elevated in adult liver, lung, spleen, and heart than in their fetal counterparts, and is higher in normal tissues than in the cancerous tissue or cell lines. Low levels of expression were detected in the promonocytic stage, whereas high levels of expression were detected in mature monocytes.

The protein resides in the membrane. In terms of biological role, may be involved in signal transduction as a component of a multimeric receptor complex. This chain is Membrane-spanning 4-domains subfamily A member 7 (MS4A7), found in Homo sapiens (Human).